The chain runs to 252 residues: Geranylgeranylglyceryl phosphate synthase (252 aa).

Mg(2+) is bound by residues aspartate 26 and serine 55. Sn-glycerol 1-phosphate-binding positions include 174–180, 205–206, and 227–228; these read YLEAGSG, GG, and GT.

Belongs to the GGGP/HepGP synthase family. Group II subfamily. As to quaternary structure, homotetramer. Homohexamer. Requires Mg(2+) as cofactor.

It localises to the cytoplasm. It catalyses the reaction sn-glycerol 1-phosphate + (2E,6E,10E)-geranylgeranyl diphosphate = sn-3-O-(geranylgeranyl)glycerol 1-phosphate + diphosphate. It participates in membrane lipid metabolism; glycerophospholipid metabolism. Prenyltransferase that catalyzes the transfer of the geranylgeranyl moiety of geranylgeranyl diphosphate (GGPP) to the C3 hydroxyl of sn-glycerol-1-phosphate (G1P). This reaction is the first ether-bond-formation step in the biosynthesis of archaeal membrane lipids. This chain is Geranylgeranylglyceryl phosphate synthase, found in Thermococcus kodakarensis (strain ATCC BAA-918 / JCM 12380 / KOD1) (Pyrococcus kodakaraensis (strain KOD1)).